Here is a 160-residue protein sequence, read N- to C-terminus: Transcription elongation factor GreA (160 aa).

A coiled-coil region spans residues 14–38 (IKAELASLKKERPEVIKAIAEAREE).

It belongs to the GreA/GreB family.

Functionally, necessary for efficient RNA polymerase transcription elongation past template-encoded arresting sites. The arresting sites in DNA have the property of trapping a certain fraction of elongating RNA polymerases that pass through, resulting in locked ternary complexes. Cleavage of the nascent transcript by cleavage factors such as GreA or GreB allows the resumption of elongation from the new 3'terminus. GreA releases sequences of 2 to 3 nucleotides. The polypeptide is Transcription elongation factor GreA (Maridesulfovibrio salexigens (strain ATCC 14822 / DSM 2638 / NCIMB 8403 / VKM B-1763) (Desulfovibrio salexigens)).